Reading from the N-terminus, the 99-residue chain is Small ribosomal subunit protein bS20 (99 aa).

The protein belongs to the bacterial ribosomal protein bS20 family.

Its function is as follows. Binds directly to 16S ribosomal RNA. The chain is Small ribosomal subunit protein bS20 from Chlamydia pneumoniae (Chlamydophila pneumoniae).